Reading from the N-terminus, the 192-residue chain is MLEEIKAQLRAHCEVMTALQGELSPAIESAVSLVVDAYRAGNKLLVMGNGGSAADAQHFVAEMVGRFKLERRALPAIALHTDTSILTAIGNDYGFDRIFSRQVEAHAAAGDVVVGISTSGNSPNVQLALELAREKGCRTVALLGKDGGSIKSVAELPLIVPSNDTPRIQEGHITIIHIICDLVERELFLKGN.

The SIS domain maps to 34–192; that stretch reads VVDAYRAGNK…VERELFLKGN (159 aa). 49-51 lines the substrate pocket; sequence NGG. His58 and Glu62 together coordinate Zn(2+). Substrate contacts are provided by residues Glu62, 91 to 92, 117 to 119, Ser122, and Gln169; these read ND and STS. Zn(2+) contacts are provided by Gln169 and His177.

The protein belongs to the SIS family. GmhA subfamily. In terms of assembly, homotetramer. Requires Zn(2+) as cofactor.

It localises to the cytoplasm. It carries out the reaction 2 D-sedoheptulose 7-phosphate = D-glycero-alpha-D-manno-heptose 7-phosphate + D-glycero-beta-D-manno-heptose 7-phosphate. It participates in carbohydrate biosynthesis; D-glycero-D-manno-heptose 7-phosphate biosynthesis; D-glycero-alpha-D-manno-heptose 7-phosphate and D-glycero-beta-D-manno-heptose 7-phosphate from sedoheptulose 7-phosphate: step 1/1. In terms of biological role, catalyzes the isomerization of sedoheptulose 7-phosphate in D-glycero-D-manno-heptose 7-phosphate. This Geobacter sp. (strain M21) protein is Phosphoheptose isomerase.